The following is a 691-amino-acid chain: Elongation factor G (691 aa).

The tr-type G domain maps to 8–282 (DRVRNIGIAA…AVVDYLPAPI (275 aa)). GTP contacts are provided by residues 17 to 24 (AHIDAGKT), 81 to 85 (DTPGH), and 135 to 138 (NKMD).

Belongs to the TRAFAC class translation factor GTPase superfamily. Classic translation factor GTPase family. EF-G/EF-2 subfamily.

It localises to the cytoplasm. Functionally, catalyzes the GTP-dependent ribosomal translocation step during translation elongation. During this step, the ribosome changes from the pre-translocational (PRE) to the post-translocational (POST) state as the newly formed A-site-bound peptidyl-tRNA and P-site-bound deacylated tRNA move to the P and E sites, respectively. Catalyzes the coordinated movement of the two tRNA molecules, the mRNA and conformational changes in the ribosome. The polypeptide is Elongation factor G (Synechococcus sp. (strain RCC307)).